Here is a 295-residue protein sequence, read N- to C-terminus: G1/S-specific cyclin-D1 (295 aa).

The Cyclin N-terminal domain occupies 28–152 (LRAMLKAEET…VLVNKLKWNL (125 aa)). The interval 264-295 (QQNLDPKAAEEEEEEEEVDLACTPTDVRDVNI) is disordered. A Glycyl lysine isopeptide (Lys-Gly) (interchain with G-Cter in ubiquitin) cross-link involves residue K270. Acidic residues predominate over residues 273–282 (EEEEEEEEVD). T286 is modified (phosphothreonine).

It belongs to the cyclin family. Cyclin D subfamily. Interacts with either CDK4 or CDK6 protein kinase to form a serine/threonine kinase holoenzyme complex. The cyclin subunit imparts substrate specificity to the complex. Component of the ternary complex CCND1/CDK4/CDKN1B required for nuclear translocation and modulation of CDK4-mediated kinase activity. Interacts directly with CDKN1B. Can form similar complexes with either CDKN1A or CDKN2A. Interacts with UHRF2; the interaction ubiquitinates CCND1 and appears to occur independently of phosphorylation. Interacts with USP2. Interacts (via cyclin N-terminal domain) with INSM1 (via N-terminal region); the interaction competes with the binding of CCND1 to CDK4 during cell cycle progression and inhibits CDK4 activity. Interacts with CDK4; the interaction is prevented with the binding of CCND1 to INSM1 during cell cycle progression. In terms of processing, phosphorylation at Thr-286 by MAP kinases is required for ubiquitination and degradation by the DCX(AMBRA1) complex. It also plays an essential role for recognition by the FBXO31 component of SCF (SKP1-cullin-F-box) protein ligase complex following DNA damage. Post-translationally, ubiquitinated at Lys-270 by the DCX(AMBRA1) complex during the transition from G1 to S cell phase, leading to its degradation: ubiquitination is dependent on Thr-286 phosphorylation. The DCX(AMBRA1) complex represents the major regulator of CCND1 stability during the G1/S transition. Also ubiquitinated by the SCF(FBXO4) and Cul7-RING(FBXW8) ubiquitin-protein ligase complexes. Following DNA damage it is ubiquitinated by the SCF(FBXO31) protein ligase complex. SCF(FBXO31) ubiquitination is dependent on Thr-286 phosphorylation. Ubiquitinated also by UHRF2 apparently in a phosphorylation-independent manner. Ubiquitination leads to its degradation and G1 arrest. Deubiquitinated by USP2; leading to its stabilization.

Its subcellular location is the nucleus. The protein resides in the cytoplasm. The protein localises to the nucleus membrane. Functionally, regulatory component of the cyclin D1-CDK4 (DC) complex that phosphorylates and inhibits members of the retinoblastoma (RB) protein family including RB1 and regulates the cell-cycle during G(1)/S transition. Phosphorylation of RB1 allows dissociation of the transcription factor E2F from the RB/E2F complex and the subsequent transcription of E2F target genes which are responsible for the progression through the G(1) phase. Hypophosphorylates RB1 in early G(1) phase. Cyclin D-CDK4 complexes are major integrators of various mitogenenic and antimitogenic signals. Also a substrate for SMAD3, phosphorylating SMAD3 in a cell-cycle-dependent manner and repressing its transcriptional activity. Component of the ternary complex, cyclin D1/CDK4/CDKN1B, required for nuclear translocation and activity of the cyclin D-CDK4 complex. Exhibits transcriptional corepressor activity with INSM1 on the NEUROD1 and INS promoters in a cell cycle-independent manner. This chain is G1/S-specific cyclin-D1 (CCND1), found in Bos taurus (Bovine).